We begin with the raw amino-acid sequence, 314 residues long: Coproporphyrin III ferrochelatase (314 aa).

His-186 and Glu-268 together coordinate Fe(2+).

This sequence belongs to the ferrochelatase family.

It localises to the cytoplasm. It carries out the reaction Fe-coproporphyrin III + 2 H(+) = coproporphyrin III + Fe(2+). It functions in the pathway porphyrin-containing compound metabolism; protoheme biosynthesis. Involved in coproporphyrin-dependent heme b biosynthesis. Catalyzes the insertion of ferrous iron into coproporphyrin III to form Fe-coproporphyrin III. This chain is Coproporphyrin III ferrochelatase, found in Lactococcus lactis subsp. lactis (strain IL1403) (Streptococcus lactis).